The sequence spans 513 residues: MLLAELAEVSRAVAATPARLEKIARLADALGRLAPDERAVGASWLAGDLPGGRVGIGAATLRAALEAAPPERSGPGLTVAEVDAALRRIAAVAGPGSGAARRRELDALLARAGNPERRFLAALVLGELRQGALEGVLADAVAKAAGLPAAEVRRAAMLAGALPPVAEAALSEGAAGLARFRLRVGEPVSPMLAQTAADVDEALRALGGEAALEWKLDGARIQAHRDGEAVRVFSRSLRDVTAAVPEVVALLRAAPEPRLVLDGEAIALRADGTPEPFQVTMRRFGRKLDVERLAPELPLTAFFFDALVAGGAELLARPERERWAALARAIPAERRVPRLVTRDPAEARAFLEDALARGQEGVVAKALDAPYEAGRRGAAWLKVKRAHTLDLVVLAAEWGSGRRRGWLSNLHLGARDPASGGFVMLGKTFKGMTDAMLAWQTDRLKALATGPLDAWQVPVRPELVVEVAFDGIQSSPRYPGGLALRFARVKRYREDKRPEDADTIETVRGLYGG.

Residue E213 participates in ATP binding. The active-site N6-AMP-lysine intermediate is the K215. Residues R220, R235, E264, F304, R376, and K382 each contribute to the ATP site.

The protein belongs to the ATP-dependent DNA ligase family. The cofactor is Mg(2+).

It carries out the reaction ATP + (deoxyribonucleotide)n-3'-hydroxyl + 5'-phospho-(deoxyribonucleotide)m = (deoxyribonucleotide)n+m + AMP + diphosphate.. Functionally, DNA ligase that seals nicks in double-stranded DNA during DNA replication, DNA recombination and DNA repair. The protein is Probable DNA ligase of Anaeromyxobacter dehalogenans (strain 2CP-C).